The chain runs to 561 residues: Potassium-transporting ATPase potassium-binding subunit (561 aa).

The next 10 helical transmembrane spans lie at 4 to 24 (IIMQ…PLGI), 65 to 85 (AGSV…VLML), 134 to 154 (GLTV…FAVI), 177 to 197 (LYIL…QGVV), 253 to 273 (FTNL…VVMF), 285 to 305 (AIMT…TISE), 380 to 400 (GLYG…LLVG), 417 to 437 (MVCL…AFAV), 484 to 504 (MVGA…ALYL), and 528 to 548 (FIGL…LPAL).

This sequence belongs to the KdpA family. As to quaternary structure, the system is composed of three essential subunits: KdpA, KdpB and KdpC.

The protein resides in the cell membrane. Functionally, part of the high-affinity ATP-driven potassium transport (or Kdp) system, which catalyzes the hydrolysis of ATP coupled with the electrogenic transport of potassium into the cytoplasm. This subunit binds the extracellular potassium ions and delivers the ions to the membrane domain of KdpB through an intramembrane tunnel. The chain is Potassium-transporting ATPase potassium-binding subunit from Listeria welshimeri serovar 6b (strain ATCC 35897 / DSM 20650 / CCUG 15529 / CIP 8149 / NCTC 11857 / SLCC 5334 / V8).